Consider the following 177-residue polypeptide: Iron-sulfur cluster assembly protein SufA (177 aa).

An N-terminal signal peptide occupies residues 1-18 (MTIHIFLCFLLILKIVNA). Positions 101, 169, and 171 each coordinate [4Fe-4S] cluster.

Belongs to the HesB/IscA family. As to quaternary structure, homodimer. Homotetramer formation is observed in vitro.

It is found in the plastid. The protein resides in the apicoplast. Its pathway is cofactor biosynthesis; iron-sulfur cluster biosynthesis. In terms of biological role, participates in the sulfur mobilization (SUF) pathway for iron-sulfur (Fe-S) cluster biogenesis. Involved in the pre-assembly of [4Fe-4S] clusters and their transfer to target proteins. The polypeptide is Iron-sulfur cluster assembly protein SufA (Plasmodium falciparum (isolate 3D7)).